The following is a 457-amino-acid chain: Multidrug resistance protein MdtK (457 aa).

Helical transmembrane passes span 11–31, 53–73, 93–113, 127–147, 160–180, 189–209, 243–263, 276–296, 314–334, 350–370, 387–407, and 418–438; these read LLAL…MGFV, IWLP…PVIA, WLAG…GYII, AVGY…FQVA, GMVM…IFIY, GGVG…LAMV, LPIA…ALLV, IALN…AAVT, AART…IFTV, VVTL…SDSI, IFYI…YILA, and PAGF…MMML.

It belongs to the multi antimicrobial extrusion (MATE) (TC 2.A.66.1) family. MdtK subfamily.

Its subcellular location is the cell inner membrane. Its function is as follows. Multidrug efflux pump that functions probably as a Na(+)/drug antiporter. The chain is Multidrug resistance protein MdtK from Escherichia coli O9:H4 (strain HS).